The following is a 79-amino-acid chain: Eumenine mastoparan-OD (79 aa).

The signal sequence occupies residues M1–A24. 5 AXPX repeats span residues A24–L27, A30–A33, A44–I47, A52–E55, and A58–E61. Positions E25–A62 are excised as a propeptide. Position 76 is a leucine amide (L76).

Expressed by the venom gland.

The protein resides in the secreted. The protein localises to the target cell membrane. In terms of biological role, antimicrobial peptide with strong activity against the fungi C.albicans (MIC=6 uM) and B.cinerea (MIC=10 uM), and weaker activity against the Gram-negative bacterium E.coli (MIC=97 uM) and Gram-positive bacterium S.aureus (MIC=97 uM). Shows cytolytic activity against insect cell lines. Has potent hemolytic activity against ovine erythrocytes (80% at 50 uM), but has no hemolytic activity against human erythrocytes. In vivo, peptide injection in the vicinity of the head and thorax of lepidopteran larvae induces feeding disorder that lasts one or two days before recovering. This chain is Eumenine mastoparan-OD, found in Orancistrocerus drewseni (Solitary wasp).